The chain runs to 304 residues: Dihydroorotate dehydrogenase B (NAD(+)), catalytic subunit (304 aa).

FMN contacts are provided by residues Ser22 and 46–47 (KG). Substrate is bound by residues Lys46 and 70–74 (NAIGL). Residues Asn100 and Asn128 each coordinate FMN. Substrate is bound at residue Asn128. The active-site Nucleophile is the Cys131. Residues Lys166 and Ile192 each coordinate FMN. 193–194 (NT) lines the substrate pocket. Residues Gly218, 244-245 (GG), and 266-267 (GT) contribute to the FMN site.

This sequence belongs to the dihydroorotate dehydrogenase family. Type 1 subfamily. Heterotetramer of 2 PyrK and 2 PyrD type B subunits. FMN is required as a cofactor.

The protein resides in the cytoplasm. It carries out the reaction (S)-dihydroorotate + NAD(+) = orotate + NADH + H(+). The protein operates within pyrimidine metabolism; UMP biosynthesis via de novo pathway; orotate from (S)-dihydroorotate (NAD(+) route): step 1/1. Its function is as follows. Catalyzes the conversion of dihydroorotate to orotate with NAD(+) as electron acceptor. The protein is Dihydroorotate dehydrogenase B (NAD(+)), catalytic subunit (pyrD) of Trichlorobacter lovleyi (strain ATCC BAA-1151 / DSM 17278 / SZ) (Geobacter lovleyi).